Here is a 183-residue protein sequence, read N- to C-terminus: Glutathione-regulated potassium-efflux system ancillary protein KefG (183 aa).

The protein belongs to the NAD(P)H dehydrogenase (quinone) family. KefG subfamily. In terms of assembly, interacts with KefB.

The protein resides in the cell inner membrane. The catalysed reaction is a quinone + NADH + H(+) = a quinol + NAD(+). It catalyses the reaction a quinone + NADPH + H(+) = a quinol + NADP(+). Its function is as follows. Regulatory subunit of a potassium efflux system that confers protection against electrophiles. Required for full activity of KefB. The chain is Glutathione-regulated potassium-efflux system ancillary protein KefG from Salmonella enteritidis PT4 (strain P125109).